The sequence spans 160 residues: Deoxyuridine 5'-triphosphate nucleotidohydrolase (160 aa).

Substrate contacts are provided by residues 79–81 (RSG), asparagine 92, 96–98 (TVD), and lysine 106.

This sequence belongs to the dUTPase family. The cofactor is Mg(2+).

The enzyme catalyses dUTP + H2O = dUMP + diphosphate + H(+). The protein operates within pyrimidine metabolism; dUMP biosynthesis; dUMP from dCTP (dUTP route): step 2/2. In terms of biological role, this enzyme is involved in nucleotide metabolism: it produces dUMP, the immediate precursor of thymidine nucleotides and it decreases the intracellular concentration of dUTP so that uracil cannot be incorporated into DNA. This is Deoxyuridine 5'-triphosphate nucleotidohydrolase from Rhizobium meliloti (strain 1021) (Ensifer meliloti).